The following is an 84-amino-acid chain: Phosphoribosylformylglycinamidine synthase subunit PurS (84 aa).

The protein belongs to the PurS family. As to quaternary structure, homodimer. Part of the FGAM synthase complex composed of 1 PurL, 1 PurQ and 2 PurS subunits.

It localises to the cytoplasm. The catalysed reaction is N(2)-formyl-N(1)-(5-phospho-beta-D-ribosyl)glycinamide + L-glutamine + ATP + H2O = 2-formamido-N(1)-(5-O-phospho-beta-D-ribosyl)acetamidine + L-glutamate + ADP + phosphate + H(+). It functions in the pathway purine metabolism; IMP biosynthesis via de novo pathway; 5-amino-1-(5-phospho-D-ribosyl)imidazole from N(2)-formyl-N(1)-(5-phospho-D-ribosyl)glycinamide: step 1/2. Its function is as follows. Part of the phosphoribosylformylglycinamidine synthase complex involved in the purines biosynthetic pathway. Catalyzes the ATP-dependent conversion of formylglycinamide ribonucleotide (FGAR) and glutamine to yield formylglycinamidine ribonucleotide (FGAM) and glutamate. The FGAM synthase complex is composed of three subunits. PurQ produces an ammonia molecule by converting glutamine to glutamate. PurL transfers the ammonia molecule to FGAR to form FGAM in an ATP-dependent manner. PurS interacts with PurQ and PurL and is thought to assist in the transfer of the ammonia molecule from PurQ to PurL. In Methanothermobacter thermautotrophicus (strain ATCC 29096 / DSM 1053 / JCM 10044 / NBRC 100330 / Delta H) (Methanobacterium thermoautotrophicum), this protein is Phosphoribosylformylglycinamidine synthase subunit PurS.